A 470-amino-acid chain; its full sequence is Pre-mycofactocin glycosyltransferase (470 aa).

The chain crosses the membrane as a helical span at residues 315-335 (LVISGGALMAWILMSIGTGLG).

This sequence belongs to the glycosyltransferase 2 family.

The protein localises to the cell membrane. Its function is as follows. Involved in the biosynthesis of the enzyme cofactor mycofactocin (MFT). Acts as a glycosyltransferase that catalyzes the oligoglycosylation of pre-mycofactocin (PMFT), adding up to nine beta-1,4-linked glucose residues. Is required for the in vivo ethanol assimilation in M.smegmatis. The sequence is that of Pre-mycofactocin glycosyltransferase (mftF) from Mycobacterium tuberculosis (strain CDC 1551 / Oshkosh).